The chain runs to 166 residues: uncharacterized protein (166 aa).

This is an uncharacterized protein from Schizosaccharomyces pombe (strain 972 / ATCC 24843) (Fission yeast).